A 159-amino-acid polypeptide reads, in one-letter code: Ribosomal RNA large subunit methyltransferase H (159 aa).

S-adenosyl-L-methionine is bound by residues Ile75, Gly108, and 127-132 (FGRMTL).

It belongs to the RNA methyltransferase RlmH family. In terms of assembly, homodimer.

Its subcellular location is the cytoplasm. It catalyses the reaction pseudouridine(1915) in 23S rRNA + S-adenosyl-L-methionine = N(3)-methylpseudouridine(1915) in 23S rRNA + S-adenosyl-L-homocysteine + H(+). Functionally, specifically methylates the pseudouridine at position 1915 (m3Psi1915) in 23S rRNA. This Lactococcus lactis subsp. lactis (strain IL1403) (Streptococcus lactis) protein is Ribosomal RNA large subunit methyltransferase H.